We begin with the raw amino-acid sequence, 98 residues long: MDVDFANAKHKLHCLLKKNFLLTIRFSSLVSIQYIPFSNRLYEIISIALNPCNFSKSLFWLRKKIKNSVLLKTSFDSNETIFFLYSLHRCVYYLFIYL.

This is an uncharacterized protein from Schizosaccharomyces pombe (strain 972 / ATCC 24843) (Fission yeast).